The following is a 596-amino-acid chain: Probable protein phosphatase 2C 26 (596 aa).

Residues 122 to 154 (SGPLDPAVPFSGPLPAKPPKPASSSSRGFSRRF) are disordered. Residues 177–584 (LRRDDGVQWA…DDVTVMVISL (408 aa)) form the PPM-type phosphatase domain. Mn(2+)-binding residues include aspartate 212, glycine 213, aspartate 512, and aspartate 575.

It belongs to the PP2C family. Mg(2+) serves as cofactor. It depends on Mn(2+) as a cofactor.

The catalysed reaction is O-phospho-L-seryl-[protein] + H2O = L-seryl-[protein] + phosphate. The enzyme catalyses O-phospho-L-threonyl-[protein] + H2O = L-threonyl-[protein] + phosphate. This is Probable protein phosphatase 2C 26 from Oryza sativa subsp. japonica (Rice).